The following is a 1399-amino-acid chain: DNA-directed RNA polymerase subunit beta' (1399 aa).

Zn(2+) is bound by residues Cys-70, Cys-72, Cys-85, and Cys-88. Mg(2+) is bound by residues Asp-460, Asp-462, and Asp-464. Zn(2+) contacts are provided by Cys-814, Cys-888, Cys-895, and Cys-898.

Belongs to the RNA polymerase beta' chain family. In terms of assembly, the RNAP catalytic core consists of 2 alpha, 1 beta, 1 beta' and 1 omega subunit. When a sigma factor is associated with the core the holoenzyme is formed, which can initiate transcription. Mg(2+) serves as cofactor. Zn(2+) is required as a cofactor.

The enzyme catalyses RNA(n) + a ribonucleoside 5'-triphosphate = RNA(n+1) + diphosphate. Functionally, DNA-dependent RNA polymerase catalyzes the transcription of DNA into RNA using the four ribonucleoside triphosphates as substrates. This Pseudomonas fluorescens (strain Pf0-1) protein is DNA-directed RNA polymerase subunit beta'.